The chain runs to 315 residues: Acetyl-coenzyme A carboxylase carboxyl transferase subunit alpha (315 aa).

The CoA carboxyltransferase C-terminal domain occupies Asn32–Met293.

The protein belongs to the AccA family. As to quaternary structure, acetyl-CoA carboxylase is a heterohexamer composed of biotin carboxyl carrier protein (AccB), biotin carboxylase (AccC) and two subunits each of ACCase subunit alpha (AccA) and ACCase subunit beta (AccD).

Its subcellular location is the cytoplasm. It carries out the reaction N(6)-carboxybiotinyl-L-lysyl-[protein] + acetyl-CoA = N(6)-biotinyl-L-lysyl-[protein] + malonyl-CoA. It functions in the pathway lipid metabolism; malonyl-CoA biosynthesis; malonyl-CoA from acetyl-CoA: step 1/1. In terms of biological role, component of the acetyl coenzyme A carboxylase (ACC) complex. First, biotin carboxylase catalyzes the carboxylation of biotin on its carrier protein (BCCP) and then the CO(2) group is transferred by the carboxyltransferase to acetyl-CoA to form malonyl-CoA. This chain is Acetyl-coenzyme A carboxylase carboxyl transferase subunit alpha, found in Pseudomonas putida (strain ATCC 47054 / DSM 6125 / CFBP 8728 / NCIMB 11950 / KT2440).